The chain runs to 201 residues: NAD(P)H quinone oxidoreductase PST2 (201 aa).

The Flavodoxin-like domain maps to 6-192; sequence VAIIIYSLYH…SIAQQQGEDF (187 aa). FMN contacts are provided by residues 12 to 16 and 112 to 164; these read SLYHH and VFVS…SPWG.

This sequence belongs to the WrbA family. FMN is required as a cofactor.

The protein localises to the cell membrane. It catalyses the reaction a quinone + NADH + H(+) = a quinol + NAD(+). The catalysed reaction is a quinone + NADPH + H(+) = a quinol + NADP(+). In terms of biological role, flavodoxin-like protein (FLP) that plays a role in cell wall integrity, oxidative stress protection and virulence. FLPs act as NAD(P)H quinone oxidoreductases. Reduces ubiquinone (coenzyme Q), enabling it to serve as an antioxidant in the membrane. The sequence is that of NAD(P)H quinone oxidoreductase PST2 from Candida albicans (strain SC5314 / ATCC MYA-2876) (Yeast).